Consider the following 82-residue polypeptide: Defensin-like protein 208 (82 aa).

The N-terminal stretch at 1 to 29 (MAKNLNTVSFTVLLLVLLMASTGILETEA) is a signal peptide. 3 disulfide bridges follow: C38–C63, C50–C76, and C54–C78.

The protein belongs to the DEFL family.

The protein resides in the secreted. In Arabidopsis thaliana (Mouse-ear cress), this protein is Defensin-like protein 208.